We begin with the raw amino-acid sequence, 506 residues long: BTB/POZ domain-containing protein 16 (506 aa).

Residues 150-206 (INDPAVTRVAFALALKNLYMNEVEMTVDNVLGVLASAHILQFNRLFRKCVSTMLNRL) enclose the BTB domain.

This Rattus norvegicus (Rat) protein is BTB/POZ domain-containing protein 16 (Btbd16).